Here is a 177-residue protein sequence, read N- to C-terminus: Large ribosomal subunit protein uL6 (177 aa).

The protein belongs to the universal ribosomal protein uL6 family. Part of the 50S ribosomal subunit.

This protein binds to the 23S rRNA, and is important in its secondary structure. It is located near the subunit interface in the base of the L7/L12 stalk, and near the tRNA binding site of the peptidyltransferase center. This chain is Large ribosomal subunit protein uL6, found in Psychromonas ingrahamii (strain DSM 17664 / CCUG 51855 / 37).